Here is a 615-residue protein sequence, read N- to C-terminus: Mitogen-activated protein kinase 18 (615 aa).

Residues 25–316 (YRILEVIGKG…PAEALADPYF (292 aa)) enclose the Protein kinase domain. ATP is bound by residues 31–39 (IGKGSYGVV) and K54. Catalysis depends on D151, which acts as the Proton acceptor. Residue T187 is modified to Phosphothreonine. The TXY motif lies at 187–189 (TDY). At Y189 the chain carries Phosphotyrosine. T192 is subject to Phosphothreonine. Disordered stretches follow at residues 414–483 (RSTV…ESSV) and 510–544 (NTMT…PPAA). The segment covering 415–426 (STVHSTVVHSTS) has biased composition (low complexity). Residues 445–459 (NGASSAGHPSTSAYP) are compositionally biased toward polar residues. Pro residues predominate over residues 464-473 (GPPPRVPPSG). Composition is skewed to polar residues over residues 510–522 (NTMT…NIEA) and 532–544 (PVHQ…PPAA).

Belongs to the protein kinase superfamily. CMGC Ser/Thr protein kinase family. MAP kinase subfamily. Interacts with PHS1. Binds to MAPKKK20. In terms of processing, dually phosphorylated on Thr-187 and Tyr-189, which activates the enzyme. Phosphorylated by MAPKKK20. In terms of tissue distribution, expressed in roots, seedlings, leaves, flower buds, flowers and siliques.

The protein resides in the nucleus. Its subcellular location is the cytoplasm. The enzyme catalyses L-seryl-[protein] + ATP = O-phospho-L-seryl-[protein] + ADP + H(+). It carries out the reaction L-threonyl-[protein] + ATP = O-phospho-L-threonyl-[protein] + ADP + H(+). Activated by threonine and tyrosine phosphorylation. Inactivated by phosphatase PHS1. In terms of biological role, mitogen-activated protein kinase (MAPK) that is specifically regulated by PHS1 and MAPKKK20 and mediates signaling that regulates cortical microtubule functions, maybe through regulation of microtubule dynamic instability. The sequence is that of Mitogen-activated protein kinase 18 from Arabidopsis thaliana (Mouse-ear cress).